The chain runs to 157 residues: ATP synthase subunit b 1 (157 aa).

The chain crosses the membrane as a helical span at residues 7–29 (LFGQMVTFALLVWFTMKYVWPPL).

This sequence belongs to the ATPase B chain family. F-type ATPases have 2 components, F(1) - the catalytic core - and F(0) - the membrane proton channel. F(1) has five subunits: alpha(3), beta(3), gamma(1), delta(1), epsilon(1). F(0) has three main subunits: a(1), b(2) and c(10-14). The alpha and beta chains form an alternating ring which encloses part of the gamma chain. F(1) is attached to F(0) by a central stalk formed by the gamma and epsilon chains, while a peripheral stalk is formed by the delta and b chains.

The protein localises to the cell inner membrane. Its function is as follows. F(1)F(0) ATP synthase produces ATP from ADP in the presence of a proton or sodium gradient. F-type ATPases consist of two structural domains, F(1) containing the extramembraneous catalytic core and F(0) containing the membrane proton channel, linked together by a central stalk and a peripheral stalk. During catalysis, ATP synthesis in the catalytic domain of F(1) is coupled via a rotary mechanism of the central stalk subunits to proton translocation. Component of the F(0) channel, it forms part of the peripheral stalk, linking F(1) to F(0). The sequence is that of ATP synthase subunit b 1 from Methylococcus capsulatus (strain ATCC 33009 / NCIMB 11132 / Bath).